The following is a 390-amino-acid chain: Olfactomedin-like protein 3A (390 aa).

The first 17 residues, 1–17 (MRALQLLVLVLSGLVGA), serve as a signal peptide directing secretion. Residues 18–91 (QQQALMDYLE…RVDRVEREMD (74 aa)) adopt a coiled-coil conformation. One can recognise an Olfactomedin-like domain in the interval 130 to 386 (DCSDMISSIK…QILYKLQLKK (257 aa)). An intrachain disulfide couples cysteine 131 to cysteine 313. Asparagine 169 carries an N-linked (GlcNAc...) asparagine glycan.

It belongs to the OLFML3 family.

It is found in the secreted. Its function is as follows. Secreted scaffold protein that plays an essential role in dorsoventral patterning during early development. Stabilizes axial formation by restricting chordin (CHRD) activity on the dorsal side. Acts by facilitating the association between the tolloid proteases and their substrate chordin (CHRD), leading to enhance chordin (CHRD) degradation. This chain is Olfactomedin-like protein 3A (olfml3a), found in Danio rerio (Zebrafish).